The chain runs to 495 residues: Guanosine-5'-triphosphate,3'-diphosphate pyrophosphatase (495 aa).

Belongs to the GppA/Ppx family. GppA subfamily.

It catalyses the reaction guanosine 3'-diphosphate 5'-triphosphate + H2O = guanosine 3',5'-bis(diphosphate) + phosphate + H(+). It functions in the pathway purine metabolism; ppGpp biosynthesis; ppGpp from GTP: step 2/2. Its function is as follows. Catalyzes the conversion of pppGpp to ppGpp. Guanosine pentaphosphate (pppGpp) is a cytoplasmic signaling molecule which together with ppGpp controls the 'stringent response', an adaptive process that allows bacteria to respond to amino acid starvation, resulting in the coordinated regulation of numerous cellular activities. In Enterobacter sp. (strain 638), this protein is Guanosine-5'-triphosphate,3'-diphosphate pyrophosphatase.